The sequence spans 147 residues: NADH-quinone oxidoreductase subunit A (147 aa).

3 helical membrane-spanning segments follow: residues 11–31 (IWPLVAYFFLVVMLVVGVMAL), 68–88 (LIAVFFVIFDVEAVFLFAWAV), and 93–113 (LGWPGYIEAIIFISILGAALA).

This sequence belongs to the complex I subunit 3 family. In terms of assembly, NDH-1 is composed of 14 different subunits. Subunits NuoA, H, J, K, L, M, N constitute the membrane sector of the complex.

The protein resides in the cell inner membrane. The enzyme catalyses a quinone + NADH + 5 H(+)(in) = a quinol + NAD(+) + 4 H(+)(out). NDH-1 shuttles electrons from NADH, via FMN and iron-sulfur (Fe-S) centers, to quinones in the respiratory chain. The immediate electron acceptor for the enzyme in this species is believed to be ubiquinone. Couples the redox reaction to proton translocation (for every two electrons transferred, four hydrogen ions are translocated across the cytoplasmic membrane), and thus conserves the redox energy in a proton gradient. The protein is NADH-quinone oxidoreductase subunit A of Nitrosospira multiformis (strain ATCC 25196 / NCIMB 11849 / C 71).